A 154-amino-acid chain; its full sequence is Ferredoxin C 1, chloroplastic (154 aa).

The N-terminal 56 residues, 1-56, are a transit peptide targeting the chloroplast; the sequence is MATLPLPTQTSTISLPKPYLSNSFSFPLRNATLSTTTNRRNFLTTGRIIARAYKVV. The 86-residue stretch at 57 to 142 folds into the 2Fe-2S ferredoxin-type domain; sequence VEHDGKTTEL…DCHIKMIPEE (86 aa). [2Fe-2S] cluster is bound by residues Cys89, Cys94, Cys97, and Cys126.

Belongs to the 2Fe2S plant-type ferredoxin family. [2Fe-2S] cluster is required as a cofactor.

Its subcellular location is the plastid. It is found in the chloroplast. In terms of biological role, ferredoxins are iron-sulfur proteins that transfer electrons in a wide variety of metabolic reactions. Mediates alternative electron partitioning in conditions of acceptor limitation at photosystem I. Accepts electrons from photosystem I (PSI) and is capable of electron transfer with FNR, but cannot support photoreduction of NADP(+). This is Ferredoxin C 1, chloroplastic from Arabidopsis thaliana (Mouse-ear cress).